Reading from the N-terminus, the 79-residue chain is ATP synthase subunit beta (79 aa).

The protein belongs to the ATPase alpha/beta chains family. In terms of assembly, F-type ATPases have 2 components, CF(1) - the catalytic core - and CF(0) - the membrane proton channel. CF(1) has five subunits: alpha(3), beta(3), gamma(1), delta(1), epsilon(1). CF(0) has three main subunits: a(1), b(2) and c(9-12). The alpha and beta chains form an alternating ring which encloses part of the gamma chain. CF(1) is attached to CF(0) by a central stalk formed by the gamma and epsilon chains, while a peripheral stalk is formed by the delta and b chains.

The protein resides in the cell membrane. It catalyses the reaction ATP + H2O + 4 H(+)(in) = ADP + phosphate + 5 H(+)(out). In terms of biological role, produces ATP from ADP in the presence of a proton gradient across the membrane. The catalytic sites are hosted primarily by the beta subunits. This chain is ATP synthase subunit beta (atpD), found in Streptococcus downei (Streptococcus sobrinus).